The primary structure comprises 469 residues: Putative diacyglycerol O-acyltransferase MT0231 (469 aa).

The active-site Proton acceptor is His139.

It belongs to the long-chain O-acyltransferase family.

It catalyses the reaction an acyl-CoA + a 1,2-diacyl-sn-glycerol = a triacyl-sn-glycerol + CoA. It participates in glycerolipid metabolism; triacylglycerol biosynthesis. The protein is Putative diacyglycerol O-acyltransferase MT0231 of Mycobacterium tuberculosis (strain CDC 1551 / Oshkosh).